Reading from the N-terminus, the 356-residue chain is Protein MGF 360-10L (356 aa).

An ANK repeat occupies 58-90 (DLNTALMIAAKENNYQLIKLFTEWGANINYGYI). Asparagine 125 is a glycosylation site (N-linked (GlcNAc...) asparagine; by host). A run of 2 helical transmembrane segments spans residues 206–228 (LNTW…YLYE) and 249–271 (NFLT…LAAI). Asparagine 352 carries an N-linked (GlcNAc...) asparagine; by host glycan.

This sequence belongs to the asfivirus MGF 360 family.

It localises to the host membrane. Its function is as follows. Plays a role in virus cell tropism, and may be required for efficient virus replication in macrophages. The protein is Protein MGF 360-10L of Ornithodoros (relapsing fever ticks).